Consider the following 362-residue polypeptide: Chorismate synthase (362 aa).

NADP(+) is bound at residue Arg-46. FMN is bound by residues 122–124 (RSS), 238–239 (NA), Gly-278, 293–297 (KPTPS), and Arg-319.

This sequence belongs to the chorismate synthase family. As to quaternary structure, homotetramer. FMNH2 is required as a cofactor.

The catalysed reaction is 5-O-(1-carboxyvinyl)-3-phosphoshikimate = chorismate + phosphate. It participates in metabolic intermediate biosynthesis; chorismate biosynthesis; chorismate from D-erythrose 4-phosphate and phosphoenolpyruvate: step 7/7. Its function is as follows. Catalyzes the anti-1,4-elimination of the C-3 phosphate and the C-6 proR hydrogen from 5-enolpyruvylshikimate-3-phosphate (EPSP) to yield chorismate, which is the branch point compound that serves as the starting substrate for the three terminal pathways of aromatic amino acid biosynthesis. This reaction introduces a second double bond into the aromatic ring system. This Campylobacter jejuni subsp. jejuni serotype O:2 (strain ATCC 700819 / NCTC 11168) protein is Chorismate synthase.